The sequence spans 735 residues: Phosphoribosylformylglycinamidine synthase subunit PurL (735 aa).

Residue His-48 is part of the active site. Residues Tyr-51 and Lys-90 each coordinate ATP. Glu-92 lines the Mg(2+) pocket. Substrate-binding positions include 93 to 96 (SHNH) and Arg-115. His-94 serves as the catalytic Proton acceptor. A Mg(2+)-binding site is contributed by Asp-116. Gln-239 lines the substrate pocket. Asp-267 contacts Mg(2+). A substrate-binding site is contributed by 311-313 (ESQ). The ATP site is built by Asp-492 and Gly-529. Asn-530 contacts Mg(2+). Substrate is bound at residue Ser-532.

This sequence belongs to the FGAMS family. In terms of assembly, monomer. Part of the FGAM synthase complex composed of 1 PurL, 1 PurQ and 2 PurS subunits.

It is found in the cytoplasm. It catalyses the reaction N(2)-formyl-N(1)-(5-phospho-beta-D-ribosyl)glycinamide + L-glutamine + ATP + H2O = 2-formamido-N(1)-(5-O-phospho-beta-D-ribosyl)acetamidine + L-glutamate + ADP + phosphate + H(+). It functions in the pathway purine metabolism; IMP biosynthesis via de novo pathway; 5-amino-1-(5-phospho-D-ribosyl)imidazole from N(2)-formyl-N(1)-(5-phospho-D-ribosyl)glycinamide: step 1/2. In terms of biological role, part of the phosphoribosylformylglycinamidine synthase complex involved in the purines biosynthetic pathway. Catalyzes the ATP-dependent conversion of formylglycinamide ribonucleotide (FGAR) and glutamine to yield formylglycinamidine ribonucleotide (FGAM) and glutamate. The FGAM synthase complex is composed of three subunits. PurQ produces an ammonia molecule by converting glutamine to glutamate. PurL transfers the ammonia molecule to FGAR to form FGAM in an ATP-dependent manner. PurS interacts with PurQ and PurL and is thought to assist in the transfer of the ammonia molecule from PurQ to PurL. This Bradyrhizobium sp. (strain BTAi1 / ATCC BAA-1182) protein is Phosphoribosylformylglycinamidine synthase subunit PurL.